Reading from the N-terminus, the 95-residue chain is uncharacterized protein (95 aa).

Residues 1–12 (MQNFMNNLSGGS) are compositionally biased toward low complexity. The tract at residues 1 to 27 (MQNFMNNLSGGSNKEGGEKSNDFLSSA) is disordered.

This is an uncharacterized protein from Schizosaccharomyces pombe (strain 972 / ATCC 24843) (Fission yeast).